We begin with the raw amino-acid sequence, 547 residues long: Chaperonin GroEL (547 aa).

ATP-binding positions include 30–33 (TLGP), K51, 87–91 (DGTTT), G415, and D496. Residues 527 to 547 (KKDSPAMPGGGGMGGMGGMDF) form a disordered region. Positions 534-547 (PGGGGMGGMGGMDF) are enriched in gly residues.

Belongs to the chaperonin (HSP60) family. In terms of assembly, forms a cylinder of 14 subunits composed of two heptameric rings stacked back-to-back. Interacts with the co-chaperonin GroES.

The protein resides in the cytoplasm. It carries out the reaction ATP + H2O + a folded polypeptide = ADP + phosphate + an unfolded polypeptide.. Together with its co-chaperonin GroES, plays an essential role in assisting protein folding. The GroEL-GroES system forms a nano-cage that allows encapsulation of the non-native substrate proteins and provides a physical environment optimized to promote and accelerate protein folding. This chain is Chaperonin GroEL, found in Methylocella silvestris (strain DSM 15510 / CIP 108128 / LMG 27833 / NCIMB 13906 / BL2).